Consider the following 325-residue polypeptide: Ribosomal RNA small subunit methyltransferase H (325 aa).

Residues Gly-33–His-35, Asp-52, Leu-87, Asp-101, and Gln-108 each bind S-adenosyl-L-methionine. The interval Ala-285–Ser-325 is disordered. Polar residues predominate over residues Asp-315–Ser-325.

The protein belongs to the methyltransferase superfamily. RsmH family.

It is found in the cytoplasm. The catalysed reaction is cytidine(1402) in 16S rRNA + S-adenosyl-L-methionine = N(4)-methylcytidine(1402) in 16S rRNA + S-adenosyl-L-homocysteine + H(+). Its function is as follows. Specifically methylates the N4 position of cytidine in position 1402 (C1402) of 16S rRNA. This chain is Ribosomal RNA small subunit methyltransferase H, found in Frankia alni (strain DSM 45986 / CECT 9034 / ACN14a).